Consider the following 132-residue polypeptide: Small ribosomal subunit protein uS8 (132 aa).

The protein belongs to the universal ribosomal protein uS8 family. As to quaternary structure, part of the 30S ribosomal subunit. Contacts proteins S5 and S12.

Functionally, one of the primary rRNA binding proteins, it binds directly to 16S rRNA central domain where it helps coordinate assembly of the platform of the 30S subunit. This is Small ribosomal subunit protein uS8 (rpsH) from Caldanaerobacter subterraneus subsp. tengcongensis (strain DSM 15242 / JCM 11007 / NBRC 100824 / MB4) (Thermoanaerobacter tengcongensis).